A 220-amino-acid polypeptide reads, in one-letter code: Iron-sulfur cluster repair protein YtfE (220 aa).

Belongs to the RIC family. YtfE subfamily. Homodimer.

Its subcellular location is the cytoplasm. Functionally, di-iron-containing protein involved in the repair of iron-sulfur clusters damaged by oxidative and nitrosative stress conditions. This chain is Iron-sulfur cluster repair protein YtfE, found in Shigella boydii serotype 18 (strain CDC 3083-94 / BS512).